A 280-amino-acid polypeptide reads, in one-letter code: Probable inactive shikimate kinase like 1, chloroplastic (280 aa).

A chloroplast-targeting transit peptide spans 1–54 (MEIFSASASLTLTGFVPRLLPLLSPQARTTLCKPLLSSSSTRLISCHSRIAPSR).

Belongs to the shikimate kinase family.

The protein localises to the plastid. It localises to the chloroplast. Its function is as follows. Required for chloroplast biogenesis. This is Probable inactive shikimate kinase like 1, chloroplastic (SKL1) from Arabidopsis thaliana (Mouse-ear cress).